Here is a 593-residue protein sequence, read N- to C-terminus: Eukaryotic peptide chain release factor subunit 1 (593 aa).

The protein belongs to the eukaryotic release factor 1 family. As to quaternary structure, heterodimer of two subunits, one of which binds GTP.

It is found in the cytoplasm. Functionally, directs the termination of nascent peptide synthesis (translation) in response to the termination codons UAA, UAG and UGA. This Caenorhabditis elegans protein is Eukaryotic peptide chain release factor subunit 1.